A 399-amino-acid chain; its full sequence is Enoyl-[acyl-carrier-protein] reductase [NADH] (399 aa).

Residues 48–53, 74–75, 111–112, and 139–140 each bind NAD(+); these read GASTGY, FE, DA, and LA. Tyr-225 is a substrate binding site. Tyr-235 (proton donor) is an active-site residue. NAD(+) contacts are provided by residues Lys-244 and 274 to 276; that span reads VVT.

Belongs to the TER reductase family. In terms of assembly, monomer.

It catalyses the reaction a 2,3-saturated acyl-[ACP] + NAD(+) = a (2E)-enoyl-[ACP] + NADH + H(+). The protein operates within lipid metabolism; fatty acid biosynthesis. Involved in the final reduction of the elongation cycle of fatty acid synthesis (FAS II). Catalyzes the reduction of a carbon-carbon double bond in an enoyl moiety that is covalently linked to an acyl carrier protein (ACP). This chain is Enoyl-[acyl-carrier-protein] reductase [NADH], found in Erwinia tasmaniensis (strain DSM 17950 / CFBP 7177 / CIP 109463 / NCPPB 4357 / Et1/99).